The following is a 198-amino-acid chain: tRNA (pseudouridine(54)-N(1))-methyltransferase (198 aa).

S-adenosyl-L-methionine is bound by residues Leu130, Gly153, 176-181, and Cys186; that span reads LSPLEL.

The protein belongs to the methyltransferase superfamily. TrmY family. As to quaternary structure, homodimer.

The protein resides in the cytoplasm. The catalysed reaction is pseudouridine(54) in tRNA + S-adenosyl-L-methionine = N(1)-methylpseudouridine(54) in tRNA + S-adenosyl-L-homocysteine + H(+). Its function is as follows. Specifically catalyzes the N1-methylation of pseudouridine at position 54 (Psi54) in tRNAs. This is tRNA (pseudouridine(54)-N(1))-methyltransferase from Methanococcus maripaludis (strain C5 / ATCC BAA-1333).